The following is a 175-amino-acid chain: MPNKEVLDNASLQRALTRITYEIIERNKGGKNLVLVGIKTRGEYLARRIADRLEQLEGVQIPVMAIDITNFRDDKPDQHNDLGLNSEERLNISEQNIVLIDDVLFTGRTIRAALDALIHIGRPKTISLAVLVDRGHRELPIRADFVGKNIPTAQNEKIKVFVQEIDGKDAVEIVH.

A PRPP-binding motif is present at residues 97-109 (IVLIDDVLFTGRT).

It belongs to the purine/pyrimidine phosphoribosyltransferase family. PyrR subfamily. Homodimer and homohexamer; in equilibrium.

The catalysed reaction is UMP + diphosphate = 5-phospho-alpha-D-ribose 1-diphosphate + uracil. In terms of biological role, regulates transcriptional attenuation of the pyrimidine nucleotide (pyr) operon by binding in a uridine-dependent manner to specific sites on pyr mRNA. This disrupts an antiterminator hairpin in the RNA and favors formation of a downstream transcription terminator, leading to a reduced expression of downstream genes. Its function is as follows. Also displays a weak uracil phosphoribosyltransferase activity which is not physiologically significant. The sequence is that of Bifunctional protein PyrR from Leuconostoc mesenteroides subsp. mesenteroides (strain ATCC 8293 / DSM 20343 / BCRC 11652 / CCM 1803 / JCM 6124 / NCDO 523 / NBRC 100496 / NCIMB 8023 / NCTC 12954 / NRRL B-1118 / 37Y).